We begin with the raw amino-acid sequence, 129 residues long: Small ribosomal subunit protein uS9 (129 aa).

This sequence belongs to the universal ribosomal protein uS9 family.

The protein is Small ribosomal subunit protein uS9 of Wolinella succinogenes (strain ATCC 29543 / DSM 1740 / CCUG 13145 / JCM 31913 / LMG 7466 / NCTC 11488 / FDC 602W) (Vibrio succinogenes).